Here is a 198-residue protein sequence, read N- to C-terminus: FMN-dependent NADH:quinone oxidoreductase (198 aa).

Ser10 is a binding site for FMN.

This sequence belongs to the azoreductase type 1 family. As to quaternary structure, homodimer. FMN is required as a cofactor.

It carries out the reaction 2 a quinone + NADH + H(+) = 2 a 1,4-benzosemiquinone + NAD(+). It catalyses the reaction N,N-dimethyl-1,4-phenylenediamine + anthranilate + 2 NAD(+) = 2-(4-dimethylaminophenyl)diazenylbenzoate + 2 NADH + 2 H(+). Quinone reductase that provides resistance to thiol-specific stress caused by electrophilic quinones. Its function is as follows. Also exhibits azoreductase activity. Catalyzes the reductive cleavage of the azo bond in aromatic azo compounds to the corresponding amines. This Paraburkholderia phymatum (strain DSM 17167 / CIP 108236 / LMG 21445 / STM815) (Burkholderia phymatum) protein is FMN-dependent NADH:quinone oxidoreductase.